The primary structure comprises 78 residues: Short neurotoxin 342 (78 aa).

The first 21 residues, Met-1–Thr-21, serve as a signal peptide directing secretion. Intrachain disulfides connect Cys-24–Cys-43, Cys-38–Cys-57, Cys-59–Cys-70, and Cys-71–Cys-76.

Belongs to the three-finger toxin family. Short-chain subfamily. Type I alpha-neurotoxin sub-subfamily. As to expression, expressed by the venom gland.

Its subcellular location is the secreted. In terms of biological role, binds to muscle nicotinic acetylcholine receptor (nAChR) and inhibit acetylcholine from binding to the receptor, thereby impairing neuromuscular transmission. The sequence is that of Short neurotoxin 342 from Drysdalia coronoides (White-lipped snake).